We begin with the raw amino-acid sequence, 105 residues long: uncharacterized protein (105 aa).

Its subcellular location is the cytoplasm. The protein resides in the nucleus. This is an uncharacterized protein from Schizosaccharomyces pombe (strain 972 / ATCC 24843) (Fission yeast).